Here is a 340-residue protein sequence, read N- to C-terminus: Phosphoribosylformylglycinamidine cyclo-ligase (340 aa).

It belongs to the AIR synthase family.

Its subcellular location is the cytoplasm. It catalyses the reaction 2-formamido-N(1)-(5-O-phospho-beta-D-ribosyl)acetamidine + ATP = 5-amino-1-(5-phospho-beta-D-ribosyl)imidazole + ADP + phosphate + H(+). It participates in purine metabolism; IMP biosynthesis via de novo pathway; 5-amino-1-(5-phospho-D-ribosyl)imidazole from N(2)-formyl-N(1)-(5-phospho-D-ribosyl)glycinamide: step 2/2. The chain is Phosphoribosylformylglycinamidine cyclo-ligase from Streptococcus pneumoniae (strain Taiwan19F-14).